A 1165-amino-acid polypeptide reads, in one-letter code: Symplekin (1165 aa).

HEAT repeat units lie at residues 23–58 (TATARAKVVDWCNELVIASPSTKCELLAKVQETVLG), 61–95 (AELAEEFLESVLSLAHDSNMEVRKQVVAFVEQVCK), 98–140 (VELL…YLCS), 147–186 (SAEQAWNILSLIKAQILDMIDNENDGIRTNAIKFLEGVVV), and 218–257 (KLQEEGNNILDILLQFHGTTHISSVNLIACTSSLCTIAKM). The segment at 365-384 (DQQQREMELDTEELERQKQK) is disordered. Positions 367-384 (QQREMELDTEELERQKQK) are enriched in basic and acidic residues.

Belongs to the Symplekin family. Interacts with Cpsf73 and Cpsf100 forming a core cleavage factor required for both polyadenylated and histone mRNA processing. Interacts with Slbp and Lsm11.

It localises to the nucleus. In terms of biological role, component of a protein complex required for cotranscriptional processing of 3'-ends of polyadenylated and histone pre-mRNA. Involved in germline stem cell transit amplification, differentiation and mitosis-to-meiosis transition. This Drosophila melanogaster (Fruit fly) protein is Symplekin.